Reading from the N-terminus, the 189-residue chain is Interferon alpha-4 (189 aa).

Residues 1 to 23 (MALSFSLLMAVLVLSYKSICSLG) form the signal peptide. Cystine bridges form between C24–C122 and C52–C162.

Belongs to the alpha/beta interferon family.

The protein localises to the secreted. Functionally, produced by macrophages, IFN-alpha have antiviral activities. Interferon stimulates the production of two enzymes: a protein kinase and an oligoadenylate synthetase. The sequence is that of Interferon alpha-4 (IFNA4) from Homo sapiens (Human).